The chain runs to 213 residues: ATP synthase peripheral stalk subunit OSCP, mitochondrial (213 aa).

A mitochondrion-targeting transit peptide spans 1–23; it reads MAALAVSGLSQQVRCFSTSVVRP. Residues 5-23 carry the SIFI-degron motif; that stretch reads AVSGLSQQVRCFSTSVVRP. 4 positions are modified to N6-acetyllysine: K54, K60, K70, and K73. N6-succinyllysine is present on K90. N6-acetyllysine; alternate is present on residues K100, K158, and K162. Residues K100, K158, and K162 each carry the N6-succinyllysine; alternate modification. N6-acetyllysine occurs at positions 172, 176, and 192. At K199 the chain carries N6-succinyllysine.

This sequence belongs to the ATPase delta chain family. In terms of assembly, component of the ATP synthase complex composed at least of ATP5F1A/subunit alpha, ATP5F1B/subunit beta, ATP5MC1/subunit c (homooctomer), MT-ATP6/subunit a, MT-ATP8/subunit 8, ATP5ME/subunit e, ATP5MF/subunit f, ATP5MG/subunit g, ATP5MK/subunit k, ATP5MJ/subunit j, ATP5F1C/subunit gamma, ATP5F1D/subunit delta, ATP5F1E/subunit epsilon, ATP5PF/subunit F6, ATP5PB/subunit b, ATP5PD/subunit d, ATP5PO/subunit OSCP. ATP synthase complex consists of a soluble F(1) head domain (subunits alpha(3) and beta(3)) - the catalytic core - and a membrane F(0) domain - the membrane proton channel (subunits c, a, 8, e, f, g, k and j). These two domains are linked by a central stalk (subunits gamma, delta, and epsilon) rotating inside the F1 region and a stationary peripheral stalk (subunits F6, b, d, and OSCP). In terms of processing, acetylation at Lys-162 decreases ATP production. Deacetylated by SIRT3. In response to mitochondrial stress, the precursor protein is ubiquitinated by the SIFI complex in the cytoplasm before mitochondrial import, leading to its degradation. Within the SIFI complex, UBR4 initiates ubiquitin chain that are further elongated or branched by KCMF1.

It is found in the mitochondrion. It localises to the mitochondrion inner membrane. Subunit OSCP, of the mitochondrial membrane ATP synthase complex (F(1)F(0) ATP synthase or Complex V) that produces ATP from ADP in the presence of a proton gradient across the membrane which is generated by electron transport complexes of the respiratory chain. ATP synthase complex consist of a soluble F(1) head domain - the catalytic core - and a membrane F(1) domain - the membrane proton channel. These two domains are linked by a central stalk rotating inside the F(1) region and a stationary peripheral stalk. During catalysis, ATP synthesis in the catalytic domain of F(1) is coupled via a rotary mechanism of the central stalk subunits to proton translocation. In vivo, can only synthesize ATP although its ATP hydrolase activity can be activated artificially in vitro. Part of the complex F(0) domain. Part of the complex F(0) domain and the peripheric stalk, which acts as a stator to hold the catalytic alpha(3)beta(3) subcomplex and subunit a/ATP6 static relative to the rotary elements. The sequence is that of ATP synthase peripheral stalk subunit OSCP, mitochondrial from Bos taurus (Bovine).